The sequence spans 512 residues: Mucin-13 (512 aa).

Residues 1 to 18 form the signal peptide; sequence MKAIIHLTLLALLSVNTA. At 19–421 the chain is on the extracellular side; the sequence is TNQGNSADAV…GLDCKDKFQL (403 aa). A compositionally biased stretch (polar residues) spans 22 to 38; it reads GNSADAVTTTETATSGP. Disordered regions lie at residues 22–67 and 133–176; these read GNSA…PTAT and MVPS…PSNP. Low complexity predominate over residues 53 to 67; the sequence is TASTTANTPSFPTAT. A compositionally biased stretch (polar residues) spans 135–176; the sequence is PSETQSNNEMSPTTEDNQSSGPPTGTALLETSTLNSTGPSNP. 2 N-linked (GlcNAc...) asparagine glycosylation sites follow: Asn151 and Asn169. Residues 173-211 form the EGF-like 1 domain; the sequence is PSNPCQDDPCADNSLCVKLHNTSFCLCLEGYYYNSSTCK. 3 disulfides stabilise this stretch: Cys177–Cys188, Cys182–Cys197, and Cys199–Cys210. Asn193, Asn206, Asn284, and Asn332 each carry an N-linked (GlcNAc...) asparagine glycan. An SEA domain is found at 212–336; that stretch reads KGKVFPGKIS…DYYGCNQTAD (125 aa). EGF-like domains are found at residues 322–361 and 363–404; these read LTLR…PFCV and SSLK…GNCQ. 6 disulfides stabilise this stretch: Cys326-Cys338, Cys331-Cys344, Cys346-Cys360, Cys367-Cys378, Cys371-Cys389, and Cys391-Cys403. Residues 422–442 traverse the membrane as a helical segment; it reads ILTIVGTIAGIVILSMIIALI. At 443-512 the chain is on the cytoplasmic side; that stretch reads VTARSNNKTK…RHSSMPRPDY (70 aa). Residues 493-505 are compositionally biased toward polar residues; sequence RDSQMQNPYSRHS. A disordered region spans residues 493 to 512; it reads RDSQMQNPYSRHSSMPRPDY.

As to quaternary structure, homodimer of beta subunits. Post-translationally, cleaved into two subunits, alpha and beta, probably between the first EGF domain and the SEA domain. Beta subunit contains the cytoplasmic tail and alpha subunit the extracellular tail. The homooligomerization into dimers is dependent on intrachain disulfide bonds. Highly N-glycosylated. As to expression, highly expressed in epithelial tissues, particularly those of the gastrointestinal and respiratory tracts, such as large intestine and trachea, followed by kidney, small intestine, appendix and stomach.

It is found in the cell membrane. Its subcellular location is the apical cell membrane. The protein resides in the secreted. In terms of biological role, epithelial and hemopoietic transmembrane mucin that may play a role in cell signaling. In Homo sapiens (Human), this protein is Mucin-13 (MUC13).